Consider the following 167-residue polypeptide: Histidinol dehydrogenase (167 aa).

Zn(2+) contacts are provided by Gln-109 and His-112.

Belongs to the histidinol dehydrogenase family. Homodimer. Zn(2+) is required as a cofactor.

It carries out the reaction L-histidinol + 2 NAD(+) + H2O = L-histidine + 2 NADH + 3 H(+). The protein operates within amino-acid biosynthesis; L-histidine biosynthesis; L-histidine from 5-phospho-alpha-D-ribose 1-diphosphate: step 9/9. In terms of biological role, catalyzes the sequential NAD-dependent oxidations of L-histidinol to L-histidinaldehyde and then to L-histidine. This Salmonella enteritidis protein is Histidinol dehydrogenase (hisD).